The primary structure comprises 428 residues: Protein clpf-1 (428 aa).

ATP contacts are provided by residues glutamate 16, arginine 56, and 124–129 (DVGKTT).

The protein belongs to the Clp1 family. Clp1 subfamily.

The protein localises to the nucleus. In terms of biological role, required for endonucleolytic cleavage during polyadenylation-dependent pre-mRNA 3'-end formation. This chain is Protein clpf-1, found in Caenorhabditis elegans.